The chain runs to 284 residues: Homeobox protein CDX-4 (284 aa).

Disordered stretches follow at residues 15-40 (PGTL…SPMP) and 120-155 (GGGT…SRHS). Gly residues predominate over residues 22–37 (GGDGTAGTGGTGGGGS). Residues 173-232 (KEKYRVVYTDHQRLELEKEFHCNRYITIQRKSELAVNLGLSERQVKIWFQNRRAKERKMI) constitute a DNA-binding region (homeobox). Positions 238–253 (QFENSGGSVQSDSDSI) are enriched in polar residues. Residues 238-259 (QFENSGGSVQSDSDSISPGELP) form a disordered region.

The protein belongs to the Caudal homeobox family.

It localises to the nucleus. The chain is Homeobox protein CDX-4 (CDX4) from Homo sapiens (Human).